The sequence spans 303 residues: Sulfotransferase 6B1 (303 aa).

3'-phosphoadenylyl sulfate is bound at residue 65-70 (KCGSNW). The active-site Proton acceptor is His-118. Residues Arg-140, Ser-148, Tyr-203, 237-242 (STFQAM), and 259-261 (RKG) each bind 3'-phosphoadenylyl sulfate.

The protein belongs to the sulfotransferase 1 family.

It localises to the cytoplasm. It is found in the cytosol. It catalyses the reaction thyroxine + 3'-phosphoadenylyl sulfate = thyroxine sulfate + adenosine 3',5'-bisphosphate + H(+). Sulfotransferase that utilizes 3'-phospho-5'-adenylyl sulfate (PAPS) as sulfonate donor to catalyze the sulfate conjugation of thyroxine. Involved in the metabolism of thyroxine. The protein is Sulfotransferase 6B1 (SULT6B1) of Pan troglodytes (Chimpanzee).